The chain runs to 329 residues: G-protein coupled bile acid receptor 1 (329 aa).

At 1–18 (MMSHNTTELSAIPRGVQE) the chain is on the extracellular side. N5 carries N-linked (GlcNAc...) asparagine glycosylation. The chain crosses the membrane as a helical span at residues 19–39 (LSLVLASLIVIANLLLALGIV). Topologically, residues 40 to 49 (LDRHLRSPPA) are cytoplasmic. A helical membrane pass occupies residues 50-70 (GCFFLSLLLAGLLTGLALPTL). The Extracellular portion of the chain corresponds to 71–84 (PGLWNRSHQGYWSC). N75 carries an N-linked (GlcNAc...) asparagine glycan. C84 and C154 are disulfide-bonded. A helical membrane pass occupies residues 85-105 (LLLHLAPNFCFLSLLANLLLV). Residues 106–124 (HGERYMAVLQPLRPHGSVR) are Cytoplasmic-facing. A helical membrane pass occupies residues 125–145 (LALFLTWISSLLFASLPALGW). At 146 to 157 (NHWSPGANCSSQ) the chain is on the extracellular side. An N-linked (GlcNAc...) asparagine glycan is attached at N153. The helical transmembrane segment at 158-178 (AIFPAPYLYLEVYGLLLPAVG) threads the bilayer. The Cytoplasmic segment spans residues 179–229 (ATALLSVRVLATAHHQLREIRRLERAVCRDAPSTLARALTWRQARAQAGAT). The helical transmembrane segment at 230–250 (LLFLLCWGPYVATLLLSVLAY) threads the bilayer. Topologically, residues 251–260 (ERRPPLGPVT) are extracellular. Residues 261–281 (LLSLISLGSASAAVVPVAMGL) traverse the membrane as a helical segment. The Cytoplasmic segment spans residues 282-329 (GDQRYTAPWRTAAQRWLQVLRGRPKRANPGPSTAYHSSSQCSTDLDLN). A disordered region spans residues 306 to 329 (KRANPGPSTAYHSSSQCSTDLDLN). Residues 311–329 (GPSTAYHSSSQCSTDLDLN) are compositionally biased toward polar residues.

It belongs to the G-protein coupled receptor 1 family.

The protein localises to the cell membrane. In terms of biological role, receptor for bile acid. Bile acid-binding induces its internalization, activation of extracellular signal-regulated kinase and intracellular cAMP production. May be involved in the suppression of macrophage functions by bile acids. Involved in bile acid promoted GLP1R secretion. The polypeptide is G-protein coupled bile acid receptor 1 (Gpbar1) (Rattus norvegicus (Rat)).